A 426-amino-acid polypeptide reads, in one-letter code: Mitochondrial distribution and morphology protein 12 (426 aa).

In terms of domain architecture, SMP-LTD spans 1 to 426 (MSIEVDWKTA…VFPSFWTFLI (426 aa)). Disordered regions lie at residues 88-147 (AHGN…GTPG), 185-264 (WTDH…FRFP), and 346-370 (ADDQ…SPKR). Residues 96-109 (THSELNEPPYRDEV) show a composition bias toward basic and acidic residues. The span at 216-236 (SSNPTSRPSTSSTLPSHPSGS) shows a compositional bias: low complexity. 2 stretches are compositionally biased toward basic and acidic residues: residues 244 to 264 (SHPE…FRFP) and 349 to 360 (QETRDKDDHPRS).

It belongs to the MDM12 family. As to quaternary structure, component of the ER-mitochondria encounter structure (ERMES) or MDM complex, composed of mmm1, mdm10, mdm12 and mdm34. A mmm1 homodimer associates with one molecule of mdm12 on each side in a pairwise head-to-tail manner, and the SMP-LTD domains of mmm1 and mdm12 generate a continuous hydrophobic tunnel for phospholipid trafficking.

It is found in the mitochondrion outer membrane. It localises to the endoplasmic reticulum membrane. Component of the ERMES/MDM complex, which serves as a molecular tether to connect the endoplasmic reticulum (ER) and mitochondria. Components of this complex are involved in the control of mitochondrial shape and protein biogenesis, and function in nonvesicular lipid trafficking between the ER and mitochondria. Mdm12 is required for the interaction of the ER-resident membrane protein mmm1 and the outer mitochondrial membrane-resident beta-barrel protein mdm10. The mdm12-mmm1 subcomplex functions in the major beta-barrel assembly pathway that is responsible for biogenesis of all mitochondrial outer membrane beta-barrel proteins, and acts in a late step after the SAM complex. The mdm10-mdm12-mmm1 subcomplex further acts in the TOM40-specific pathway after the action of the mdm12-mmm1 complex. Essential for establishing and maintaining the structure of mitochondria and maintenance of mtDNA nucleoids. The sequence is that of Mitochondrial distribution and morphology protein 12 from Aspergillus terreus (strain NIH 2624 / FGSC A1156).